The sequence spans 450 residues: Phosphoglucosamine mutase (450 aa).

Serine 107 acts as the Phosphoserine intermediate in catalysis. Mg(2+) is bound by residues serine 107, aspartate 246, aspartate 248, and aspartate 250. A Phosphoserine modification is found at serine 107.

It belongs to the phosphohexose mutase family. It depends on Mg(2+) as a cofactor. Post-translationally, activated by phosphorylation.

It catalyses the reaction alpha-D-glucosamine 1-phosphate = D-glucosamine 6-phosphate. In terms of biological role, catalyzes the conversion of glucosamine-6-phosphate to glucosamine-1-phosphate. This chain is Phosphoglucosamine mutase, found in Aromatoleum aromaticum (strain DSM 19018 / LMG 30748 / EbN1) (Azoarcus sp. (strain EbN1)).